Consider the following 782-residue polypeptide: Anoctamin-9 (782 aa).

The Cytoplasmic segment spans residues methionine 1–threonine 198. The chain crosses the membrane as a helical span at residues tyrosine 199 to phenylalanine 219. Over glutamate 220–asparagine 264 the chain is Extracellular. Serine 250 is subject to Phosphoserine; by PKA. Residues aspartate 265–tryptophan 285 form a helical membrane-spanning segment. Residues lysine 286–threonine 331 lie on the Cytoplasmic side of the membrane. The helical transmembrane segment at valine 332 to valine 352 threads the bilayer. Topologically, residues valine 353 to glutamine 373 are extracellular. A helical membrane pass occupies residues valine 374–threonine 394. The Cytoplasmic portion of the chain corresponds to lysine 395–arginine 423. A helical transmembrane segment spans residues phenylalanine 424–glycine 444. Over arginine 445–threonine 552 the chain is Extracellular. The helical transmembrane segment at isoleucine 553–isoleucine 573 threads the bilayer. Over arginine 574–threonine 604 the chain is Cytoplasmic. Residues isoleucine 605–proline 625 traverse the membrane as a helical segment. Topologically, residues arginine 626–leucine 703 are extracellular. 4 N-linked (GlcNAc...) asparagine glycosylation sites follow: asparagine 641, asparagine 652, asparagine 674, and asparagine 690. The chain crosses the membrane as a helical span at residues alanine 704 to valine 724. The Cytoplasmic portion of the chain corresponds to proline 725–valine 782. Residues glycine 756–valine 782 form a disordered region.

The protein belongs to the anoctamin family. In terms of processing, phosphorylated on serine residues by cAMP-dependent protein kinase A (PKA) which is essential for activation of its cation channel activity. As to expression, expressed in the kidney. Expressed in the olfactory epithelium.

It localises to the cell membrane. The protein resides in the endoplasmic reticulum. The catalysed reaction is a 1,2-diacyl-sn-glycero-3-phospho-L-serine(in) = a 1,2-diacyl-sn-glycero-3-phospho-L-serine(out). The enzyme catalyses a beta-D-galactosyl-(1&lt;-&gt;1')-N-acylsphing-4-enine(out) = a beta-D-galactosyl-(1&lt;-&gt;1')-N-acylsphing-4-enine(in). It carries out the reaction a 1,2-diacyl-sn-glycero-3-phosphocholine(in) = a 1,2-diacyl-sn-glycero-3-phosphocholine(out). It catalyses the reaction Ca(2+)(in) = Ca(2+)(out). The catalysed reaction is Na(+)(in) = Na(+)(out). The enzyme catalyses K(+)(in) = K(+)(out). Its activity is regulated as follows. Cation channel activity is activated via phosphorylation on serine residues by cAMP-dependent protein kinase A (PKA). Functionally, PKA-activated nonselective cation channel. Discriminates poorly among cations but is more permeable to Ca(2+) ions than to monovalent cations. Acts as a calcium-activated calcium permeable channel which may operate as a endoplasmic reticulum (ER) Ca(2+)-leak channel, reducing the loading of the ER Ca(2+) store. Regulates intracellular Ca2+ signals, ion channel activity, and cytokine release in the renal tissue. Plays an important role in olfaction, amplifying cAMP-evoked cyclic nucleotide-gated (CNG) channel currents in the olfactory sensory neurons. Has calcium-dependent phospholipid scramblase activity; scrambles phosphatidylserine, phosphatidylcholine and galactosylceramide. Does not exhibit calcium-activated chloride channel (CaCC) activity. Can inhibit the activity of ANO1. The polypeptide is Anoctamin-9 (ANO9) (Homo sapiens (Human)).